The chain runs to 250 residues: Homeobox protein DLL-1 (250 aa).

2 disordered regions span residues 40–66 (YPSL…SGSN) and 84–106 (SPYL…PDQQ). Over residues 84-98 (SPYLQSCNSNTTTQS) the composition is skewed to polar residues. A DNA-binding region (homeobox) is located at residues 125–184 (IRKPRTIYSSLQLQALNHRFQQTQYLALPERAELAASLGVTQTQVKIWFQNKRSKYKKLI).

Belongs to the distal-less homeobox family.

The protein resides in the nucleus. The sequence is that of Homeobox protein DLL-1 (dll1) from Xenopus laevis (African clawed frog).